Consider the following 111-residue polypeptide: uncharacterized protein (111 aa).

2 consecutive transmembrane segments (helical) span residues 18–38 and 42–62; these read LNVF…LFVS and LALA…RTFP.

It localises to the membrane. This is an uncharacterized protein from Saccharomyces cerevisiae (strain ATCC 204508 / S288c) (Baker's yeast).